The primary structure comprises 402 residues: Argininosuccinate synthase (402 aa).

Residue 9–17 coordinates ATP; it reads AYSGGLDTS. Tyrosine 86 contacts L-citrulline. Glycine 116 is a binding site for ATP. Residues threonine 118, asparagine 122, and aspartate 123 each contribute to the L-aspartate site. Residue asparagine 122 coordinates L-citrulline. Residues arginine 126, serine 174, serine 183, glutamate 259, and tyrosine 271 each coordinate L-citrulline.

It belongs to the argininosuccinate synthase family. Type 1 subfamily. In terms of assembly, homotetramer.

It is found in the cytoplasm. It catalyses the reaction L-citrulline + L-aspartate + ATP = 2-(N(omega)-L-arginino)succinate + AMP + diphosphate + H(+). It functions in the pathway amino-acid biosynthesis; L-arginine biosynthesis; L-arginine from L-ornithine and carbamoyl phosphate: step 2/3. This chain is Argininosuccinate synthase, found in Anoxybacillus flavithermus (strain DSM 21510 / WK1).